The following is a 375-amino-acid chain: Response regulator aspartate phosphatase E (375 aa).

Residues 24–95 adopt a coiled-coil conformation; that stretch reads NVTDAEMLKA…HKKKLDNMRA (72 aa). 6 TPR repeats span residues 96–129, 177–210, 219–252, 258–291, 297–330, and 333–366; these read YYYN…IPTI, IQCH…AELL, ATAF…YRKI, PQAY…AVDF, MNLF…KGYP, and EELA…QKQI.

This sequence belongs to the Rap family.

The protein resides in the cytoplasm. Its activity is regulated as follows. Phosphatase activity is inhibited by the phosphatase regulator PhrE. In terms of biological role, involved in the regulation of sporulation. Acts as a phosphatase that specifically dephosphorylates the sporulation initiation phosphotransferase Spo0F and inhibits its activity. Probably plays a dispensable role in the overall context of sporulation initiation. The polypeptide is Response regulator aspartate phosphatase E (rapE) (Bacillus subtilis (strain 168)).